The sequence spans 185 residues: Cbp/p300-interacting transactivator 4 (185 aa).

Disordered stretches follow at residues 15-64 and 95-130; these read PRPP…VAYG and YPGR…AHAL. Over residues 103-125 the composition is skewed to pro residues; sequence PGAPGGPSGPQPAPGAPAPPLQP.

This sequence belongs to the CITED family. In terms of assembly, interacts via its C-terminal region with the CH1 domain of CREBBP and EP300. Interacts with all TFAP2/AP-2 isoforms.

It is found in the nucleus. The protein resides in the cytoplasm. Its function is as follows. Acts as a transcriptional coactivator for TFAP2/AP-2. Enhances estrogen-dependent transactivation mediated by estrogen receptors. May function as an inhibitor of transactivation by HIF1A by disrupting HIF1A interaction with CREBBP. May be involved in regulation of gene expression during development and differentiation of blood cells, endothelial cells and mammary epithelial cells. In Bos taurus (Bovine), this protein is Cbp/p300-interacting transactivator 4 (CITED4).